The following is a 290-amino-acid chain: MPPVSFAAASDPAPRSALPIGVFDSGAGGLSVLAELQRALPQEDVLYLADTAHVPYGARSDEDIRDLTARAVAELVRRGVKAVVVACNTASAFSLTHLRERFELPIIGLVPAVKPAVAATKSGVVGVLATPGTLRGTLLADVIRQWAEPAGVRVMQAVSTELVPLVEAGKADSPEARVVLRDVLEPLAEAGADQLVLGCTHYPFLAGSIRAEFGDTFALVDSGAAVARHTRNVLSRGGLLRGGDRTGEVSYLTTSDPAHLRALLMTLRPGGADGASLPDPPSPRIELTTT.

Substrate is bound by residues 24 to 25 (DS) and 56 to 57 (YG). Catalysis depends on cysteine 87, which acts as the Proton donor/acceptor. 88-89 (NT) is a binding site for substrate. Residue cysteine 199 is the Proton donor/acceptor of the active site. 200–201 (TH) serves as a coordination point for substrate. A disordered region spans residues 271–290 (GADGASLPDPPSPRIELTTT).

It belongs to the aspartate/glutamate racemases family.

It carries out the reaction L-glutamate = D-glutamate. It functions in the pathway cell wall biogenesis; peptidoglycan biosynthesis. In terms of biological role, provides the (R)-glutamate required for cell wall biosynthesis. The protein is Glutamate racemase of Deinococcus radiodurans (strain ATCC 13939 / DSM 20539 / JCM 16871 / CCUG 27074 / LMG 4051 / NBRC 15346 / NCIMB 9279 / VKM B-1422 / R1).